Consider the following 156-residue polypeptide: Small ribosomal subunit protein uS7 (156 aa).

Belongs to the universal ribosomal protein uS7 family. As to quaternary structure, part of the 30S ribosomal subunit. Contacts proteins S9 and S11.

Functionally, one of the primary rRNA binding proteins, it binds directly to 16S rRNA where it nucleates assembly of the head domain of the 30S subunit. Is located at the subunit interface close to the decoding center, probably blocks exit of the E-site tRNA. This chain is Small ribosomal subunit protein uS7, found in Clostridium acetobutylicum (strain ATCC 824 / DSM 792 / JCM 1419 / IAM 19013 / LMG 5710 / NBRC 13948 / NRRL B-527 / VKM B-1787 / 2291 / W).